A 172-amino-acid chain; its full sequence is Adenylate kinase isoenzyme 6 (172 aa).

The ATP site is built by G13, G15, K16, T17, and T18. The interval N33–L56 is NMP. The segment at N33–L56 is NMPbind. The segment at T108 to D118 is LID. 2 residues coordinate ATP: R109 and K148.

It belongs to the adenylate kinase family. AK6 subfamily. Monomer and homodimer. Interacts with small ribosomal subunit protein uS11. Not a structural component of 43S pre-ribosomes, but transiently interacts with them by binding to uS11. Interacts with COIL (via C-terminus). In terms of tissue distribution, expressed in heart, brain, placenta, lung, liver, skeletal muscle, kidney, pancreas, chorionic villi and the central nervous system.

Its subcellular location is the cytoplasm. It is found in the nucleus. The protein resides in the nucleoplasm. It localises to the cajal body. The catalysed reaction is AMP + ATP = 2 ADP. It carries out the reaction ATP + H2O = ADP + phosphate + H(+). In terms of biological role, broad-specificity nucleoside monophosphate (NMP) kinase that catalyzes the reversible transfer of the terminal phosphate group between nucleoside triphosphates and monophosphates. Also has ATPase activity. Involved in the late cytoplasmic maturation steps of the 40S ribosomal particles, specifically 18S rRNA maturation. While NMP activity is not required for ribosome maturation, ATPase activity is. Associates transiently with small ribosomal subunit protein uS11. ATP hydrolysis breaks the interaction with uS11. May temporarily remove uS11 from the ribosome to enable a conformational change of the ribosomal RNA that is needed for the final maturation step of the small ribosomal subunit. Its NMP activity may have a role in nuclear energy homeostasis. AMP and dAMP are the preferred substrates, but CMP and dCMP are also good substrates. IMP is phosphorylated to a much lesser extent. All nucleoside triphosphates ATP, GTP, UTP, CTP, dATP, dCTP, dGTP, and TTP are accepted as phosphate donors. CTP is the best phosphate donor, followed by UTP, ATP, GTP and dCTP. May be involved in regulation of Cajal body (CB) formation. The protein is Adenylate kinase isoenzyme 6 of Homo sapiens (Human).